The chain runs to 169 residues: Transcription antitermination protein NusB (169 aa).

The interval 147-169 (RGLIDQSFSRPQKPESEATEIEE) is disordered.

The protein belongs to the NusB family.

Its function is as follows. Involved in transcription antitermination. Required for transcription of ribosomal RNA (rRNA) genes. Binds specifically to the boxA antiterminator sequence of the ribosomal RNA (rrn) operons. This is Transcription antitermination protein NusB from Chlorobium chlorochromatii (strain CaD3).